Consider the following 196-residue polypeptide: Imidazoleglycerol-phosphate dehydratase (196 aa).

Belongs to the imidazoleglycerol-phosphate dehydratase family.

It is found in the cytoplasm. It catalyses the reaction D-erythro-1-(imidazol-4-yl)glycerol 3-phosphate = 3-(imidazol-4-yl)-2-oxopropyl phosphate + H2O. Its pathway is amino-acid biosynthesis; L-histidine biosynthesis; L-histidine from 5-phospho-alpha-D-ribose 1-diphosphate: step 6/9. The sequence is that of Imidazoleglycerol-phosphate dehydratase from Phenylobacterium zucineum (strain HLK1).